A 174-amino-acid polypeptide reads, in one-letter code: Thioredoxin O, mitochondrial (174 aa).

The transit peptide at 1-59 (MALAHRLCRLPRLLPLAAAAAASKPYLPGKPSPAPPPPLSSPPPFPSLSRLFSTTPSSS) directs the protein to the mitochondrion. Positions 60–172 (GDSSMVVVGS…LESTMESLHK (113 aa)) constitute a Thioredoxin domain. Residues C96 and C99 each act as nucleophile in the active site. A disulfide bridge connects residues C96 and C99.

This sequence belongs to the thioredoxin family. Plant O-type subfamily.

It is found in the mitochondrion. Its function is as follows. Probable thiol-disulfide oxidoreductase that may participate in various redox reactions. This Oryza sativa subsp. japonica (Rice) protein is Thioredoxin O, mitochondrial.